Here is a 115-residue protein sequence, read N- to C-terminus: Tyrosine-protein phosphatase 23 (115 aa).

Positions 1-115 constitute a Tyrosine-protein phosphatase domain; it reads WMMIVEQKCR…EIGGDAPMVV (115 aa). D83 is a substrate binding site.

This sequence belongs to the protein-tyrosine phosphatase family.

The catalysed reaction is O-phospho-L-tyrosyl-[protein] + H2O = L-tyrosyl-[protein] + phosphate. In Styela plicata (Wrinkled sea squirt), this protein is Tyrosine-protein phosphatase 23 (STY-23).